The sequence spans 244 residues: ATP synthase subunit O, mitochondrial (244 aa).

A mitochondrion-targeting transit peptide spans 1 to 45 (MAMTGRARSMGFSILQKALSSAQRSNAHRSILCPTLSNSELLRNY).

The protein belongs to the ATPase delta chain family. As to quaternary structure, F-type ATPases have 2 components, CF(1) - the catalytic core - and CF(0) - the membrane proton channel. CF(1) has five subunits: alpha(3), beta(3), gamma(1), delta(1), epsilon(1). CF(0) has three main subunits: a, b and c.

The protein resides in the mitochondrion. It is found in the mitochondrion inner membrane. Its function is as follows. Mitochondrial membrane ATP synthase (F(1)F(0) ATP synthase or Complex V) produces ATP from ADP in the presence of a proton gradient across the membrane which is generated by electron transport complexes of the respiratory chain. F-type ATPases consist of two structural domains, F(1) - containing the extramembraneous catalytic core and F(0) - containing the membrane proton channel, linked together by a central stalk and a peripheral stalk. During catalysis, ATP synthesis in the catalytic domain of F(1) is coupled via a rotary mechanism of the central stalk subunits to proton translocation. Part of the complex F(0) domain and the peripheric stalk, which acts as a stator to hold the catalytic alpha(3)beta(3) subcomplex and subunit a/ATP6 static relative to the rotary elements. The sequence is that of ATP synthase subunit O, mitochondrial from Ipomoea batatas (Sweet potato).